The following is a 609-amino-acid chain: Hemagglutinin/proteinase (609 aa).

The N-terminal stretch at 1–24 (MKMIQRPLNWLVLAGAATGFPLYA) is a signal peptide. Positions 25 to 196 (AQMVTIDDAS…LDQWDGINHA (172 aa)) are excised as a propeptide. Residue His-343 participates in Zn(2+) binding. Glu-344 is a catalytic residue. Zn(2+) contacts are provided by His-347 and Glu-367. Catalysis depends on His-426, which acts as the Proton donor.

Belongs to the peptidase M4 family. Requires Zn(2+) as cofactor.

It is found in the secreted. In terms of biological role, may play a role in the pathogenesis of cholera. Hap nicks and activates the A subunit of cholera enterotoxin and related enterotoxins. This is Hemagglutinin/proteinase (hap) from Vibrio cholerae serotype O1 (strain ATCC 39315 / El Tor Inaba N16961).